The chain runs to 112 residues: Putative pterin-4-alpha-carbinolamine dehydratase (112 aa).

This sequence belongs to the pterin-4-alpha-carbinolamine dehydratase family.

The catalysed reaction is (4aS,6R)-4a-hydroxy-L-erythro-5,6,7,8-tetrahydrobiopterin = (6R)-L-erythro-6,7-dihydrobiopterin + H2O. This is Putative pterin-4-alpha-carbinolamine dehydratase from Shewanella pealeana (strain ATCC 700345 / ANG-SQ1).